The primary structure comprises 97 residues: CLAVATA3/ESR (CLE)-related protein ESR2-C (97 aa).

Positions 1-97 are disordered; the sequence is TRTDDKPGVN…IGPPPFLDRY (97 aa). Residues proline 47 and proline 50 each carry the hydroxyproline modification. An O-linked (Ara...) hydroxyproline glycan is attached at proline 50.

It belongs to the CLV3/ESR signal peptide family. Post-translationally, the O-glycosylation (arabinosylation) of the hydroxyproline Pro-50 enhances binding affinity of the ESR2Cp peptide for its receptor. In terms of tissue distribution, seed endosperm.

Its subcellular location is the secreted. It is found in the extracellular space. Extracellular signal peptide that regulates cell fate. This chain is CLAVATA3/ESR (CLE)-related protein ESR2-C, found in Zea mays (Maize).